The chain runs to 1308 residues: D-lysergyl-peptide-synthetase subunit 2 (1308 aa).

The tract at residues 261–658 (EWCRRTPSAV…CRKSTQVKLR (398 aa)) is adenylation (A) domain. The region spanning 803–871 (IEEAFQRFFA…ELSELARHTK (69 aa)) is the Carrier domain. At Ser835 the chain carries O-(pantetheine 4'-phosphoryl)serine. Residues 910 to 1299 (EDVYPCTPLQ…HAAPRTLIGD (390 aa)) form a condensation (C) domain region.

It belongs to the NRP synthetase family.

It participates in alkaloid biosynthesis; ergot alkaloid biosynthesis. Functionally, D-lysergyl-peptide-synthetase subunit 2; part of the gene cluster that mediates the biosynthesis of fungal ergot alkaloid. DmaW catalyzes the first step of ergot alkaloid biosynthesis by condensing dimethylallyl diphosphate (DMAP) and tryptophan to form 4-dimethylallyl-L-tryptophan. The second step is catalyzed by the methyltransferase easF that methylates 4-dimethylallyl-L-tryptophan in the presence of S-adenosyl-L-methionine, resulting in the formation of 4-dimethylallyl-L-abrine. The catalase easC and the FAD-dependent oxidoreductase easE then transform 4-dimethylallyl-L-abrine to chanoclavine-I which is further oxidized by EasD in the presence of NAD(+), resulting in the formation of chanoclavine-I aldehyde. Agroclavine dehydrogenase easG then mediates the conversion of chanoclavine-I aldehyde to agroclavine via a non-enzymatic adduct reaction: the substrate is an iminium intermediate that is formed spontaneously from chanoclavine-I aldehyde in the presence of glutathione. The presence of easA is not required to complete this reaction. Further conversion of agroclavine to paspalic acid is a two-step process involving oxidation of agroclavine to elymoclavine and of elymoclavine to paspalic acid, the second step being performed by the elymoclavine oxidase cloA. Paspalic acid is then further converted to D-lysergic acid. Ergopeptines are assembled from D-lysergic acid and three different amino acids by the D-lysergyl-peptide-synthetases composed each of a monomudular and a trimodular nonribosomal peptide synthetase subunit. LpsB and lpsC encode the monomodular subunits responsible for D-lysergic acid activation and incorporation into the ergopeptine backbone. LpsA1 and A2 subunits encode the trimodular nonribosomal peptide synthetase assembling the tripeptide portion of ergopeptines. LpsA1 is responsible for formation of the major ergopeptine, ergotamine, and lpsA2 for alpha-ergocryptine, the minor ergopeptine of the total alkaloid mixture elaborated by C.purpurea. D-lysergyl-tripeptides are assembled by the nonribosomal peptide synthetases and released as N-(D-lysergyl-aminoacyl)-lactams. Cyclolization of the D-lysergyl-tripeptides is performed by the Fe(2+)/2-ketoglutarate-dependent dioxygenase easH which introduces a hydroxyl group into N-(D-lysergyl-aminoacyl)-lactam at alpha-C of the aminoacyl residue followed by spontaneous condensation with the terminal lactam carbonyl group. The protein is D-lysergyl-peptide-synthetase subunit 2 of Claviceps purpurea (Ergot fungus).